Reading from the N-terminus, the 127-residue chain is Nuclear transport factor 2 (127 aa).

Lysine 4 is subject to N6-acetyllysine. The region spanning 10–121 (IGSSFIQHYY…WVCTNDMFRL (112 aa)) is the NTF2 domain.

Homodimer. Interacts with RAN (GDP-bound form); the interaction is direct and regulates RAN nuclear import. Interacts with the nucleoporins NUP54, NUP58 and NUP62 (via FG repeats); recruits NUTF2 to the nuclear pore complex a step required for NUTF2-mediated GDP-bound RAN nuclear import. Interacts with CAPG; mediates its nuclear import.

It localises to the cytoplasm. The protein resides in the cytosol. Its subcellular location is the nucleus outer membrane. It is found in the nucleus. The protein localises to the nuclear pore complex. It localises to the nucleus inner membrane. The protein resides in the nucleoplasm. Functionally, mediates the import of GDP-bound RAN from the cytoplasm into the nucleus which is essential for the function of RAN in cargo receptor-mediated nucleocytoplasmic transport. Thereby, plays indirectly a more general role in cargo receptor-mediated nucleocytoplasmic transport. Interacts with GDP-bound RAN in the cytosol, recruits it to the nuclear pore complex via its interaction with nucleoporins and promotes its nuclear import. This is Nuclear transport factor 2 from Bos taurus (Bovine).